Reading from the N-terminus, the 370-residue chain is Aldo-keto reductase dtxS3 (370 aa).

D78 is a binding site for NADP(+). The active-site Proton donor is Y83. H174 contacts substrate. NADP(+) is bound by residues 204-205, Q230, 259-269, and 333-341; these read SS, GPLASGRLARR, and GSVGRIEEA.

This sequence belongs to the aldo/keto reductase family.

It functions in the pathway secondary metabolite biosynthesis. Functionally, aldo-keto reductase; part of the gene cluster that mediates the biosynthesis of destruxins, insecticidal cyclic hexadepsipeptides which induce flaccid paralysis and visceral muscle contraction in insects through targeting the calcium channels and vacuolar-type ATPases. The aldo-keto reductase dtxS3 converts alpha-ketoisocaproic acid from deaminated leucine into alpha-hydroxyisocaproic acid (HIC), which is the first substrate for destruxin assembly by dtxS1. L-aspartate decarboxylase dtxS4 converts aspartic acid into beta-alanine, the last substrate for the destruxin assembly line performed by dtxS1. The nonribosomal peptide synthetase dtxS1 synthesizes destruxins B and B2, whereas the cytochrome P450 monooxygenase dtxS2 is required to convert destruxin B into other destruxin derivatives, including destructins C, D, A and E. Destruxin E-diol (ED) is further produced in a non-enzymatic manner from destruxin E. Destruxins play an important role in virulence and escape from insect host immune defenses. The chain is Aldo-keto reductase dtxS3 from Metarhizium robertsii (strain ARSEF 23 / ATCC MYA-3075) (Metarhizium anisopliae (strain ARSEF 23)).